A 324-amino-acid polypeptide reads, in one-letter code: Biotin synthase (324 aa).

The Radical SAM core domain occupies 42–269; that stretch reads NEVQISSLLN…KSYIRLAAGR (228 aa). Positions 57, 61, and 64 each coordinate [4Fe-4S] cluster. 4 residues coordinate [2Fe-2S] cluster: C101, C132, C192, and R264.

This sequence belongs to the radical SAM superfamily. Biotin synthase family. In terms of assembly, homodimer. [4Fe-4S] cluster is required as a cofactor. [2Fe-2S] cluster serves as cofactor.

The catalysed reaction is (4R,5S)-dethiobiotin + (sulfur carrier)-SH + 2 reduced [2Fe-2S]-[ferredoxin] + 2 S-adenosyl-L-methionine = (sulfur carrier)-H + biotin + 2 5'-deoxyadenosine + 2 L-methionine + 2 oxidized [2Fe-2S]-[ferredoxin]. It functions in the pathway cofactor biosynthesis; biotin biosynthesis; biotin from 7,8-diaminononanoate: step 2/2. Functionally, catalyzes the conversion of dethiobiotin (DTB) to biotin by the insertion of a sulfur atom into dethiobiotin via a radical-based mechanism. In Ehrlichia canis (strain Jake), this protein is Biotin synthase.